A 199-amino-acid chain; its full sequence is Minor spike protein H (199 aa).

The disordered stretch occupies residues 171–199 (EDSNGPRLSNLREEKKPNQMPLKNGKLNT).

This sequence belongs to the microviridae H protein family.

The protein resides in the virion. Functionally, probably triggers with protein G the injection of the phage DNA into the host upon conformational changes induced by virus-host receptor interaction. The sequence is that of Minor spike protein H from Bdellovibrio bacteriovorus (Bacteriophage phiMH2K).